Here is a 421-residue protein sequence, read N- to C-terminus: Putative bifunctional polynucleotide phosphatase/kinase (421 aa).

The phosphatase stretch occupies residues 25–231 (DSYLKGIINN…SENLKTNYKL (207 aa)). The tract at residues 235-415 (NPTEIIDEIE…DDPKWKRSFM (181 aa)) is kinase. Residue 265 to 272 (GQPGSGKS) participates in ATP binding.

The protein in the N-terminal section; belongs to the DNA 3' phosphatase family.

The enzyme catalyses a 3'end (2'-deoxyribonucleotide 3'-phosphate)-DNA + H2O = a 3'-end 2'-deoxyribonucleotide-DNA + phosphate. It carries out the reaction a 5'-end dephospho-2'-deoxyribonucleoside-DNA + ATP = a 5'-end 5'-phospho-2'-deoxyribonucleoside-DNA + ADP + H(+). In Acanthamoeba polyphaga mimivirus (APMV), this protein is Putative bifunctional polynucleotide phosphatase/kinase.